The primary structure comprises 181 residues: MTASESFVGMQVLAQDKEVKATFIALDRKLPANLKVPYMKNAKYRTCICPSSNHLVDDCVCEDVIIAYTAHRNNAVAALLYSDGNVIHRSGTLKPKSQNRFDLRGFLTSVNPGESSRNEAGASKSTQKTYDRKDKSPSKSRNSKKGAKKSSSARKKKEYSSNSETDLSSDSDANTRKSKRK.

The disordered stretch occupies residues 106 to 181; it reads FLTSVNPGES…DANTRKSKRK (76 aa). Over residues 141–157 the composition is skewed to basic residues; that stretch reads RNSKKGAKKSSSARKKK. Low complexity predominate over residues 160–172; sequence SSNSETDLSSDSD.

Belongs to the phytoreovirus RNA-binding protein family.

It localises to the host cytoplasm. Functionally, constituent of viral factories. Binds to ssRNA and dsRNA. The sequence is that of RNA-binding protein from Rice dwarf virus (isolate Akita) (RDV).